The chain runs to 242 residues: 1-(5-phosphoribosyl)-5-[(5-phosphoribosylamino)methylideneamino] imidazole-4-carboxamide isomerase (242 aa).

D8 acts as the Proton acceptor in catalysis. The active-site Proton donor is D129.

The protein belongs to the HisA/HisF family.

It localises to the cytoplasm. It carries out the reaction 1-(5-phospho-beta-D-ribosyl)-5-[(5-phospho-beta-D-ribosylamino)methylideneamino]imidazole-4-carboxamide = 5-[(5-phospho-1-deoxy-D-ribulos-1-ylimino)methylamino]-1-(5-phospho-beta-D-ribosyl)imidazole-4-carboxamide. The protein operates within amino-acid biosynthesis; L-histidine biosynthesis; L-histidine from 5-phospho-alpha-D-ribose 1-diphosphate: step 4/9. The polypeptide is 1-(5-phosphoribosyl)-5-[(5-phosphoribosylamino)methylideneamino] imidazole-4-carboxamide isomerase (Erythrobacter litoralis (strain HTCC2594)).